A 406-amino-acid chain; its full sequence is Putative phosphate permease TK2061 (406 aa).

The next 10 helical transmembrane spans lie at 2-22 (AVMD…AWAI), 45-65 (AVLI…KSVT), 82-102 (TVLI…LVIA), 115-135 (IIGG…VNWG), 139-159 (QVVL…FLVF), 182-202 (FWIG…VLHG), 208-228 (GVLF…FLTL), 288-308 (VPVP…GVAT), 324-346 (LTNT…ASWL), and 385-405 (FVTV…LMIV).

This sequence belongs to the inorganic phosphate transporter (PiT) (TC 2.A.20) family.

It is found in the cell membrane. Functionally, potential transporter for phosphate. This chain is Putative phosphate permease TK2061, found in Thermococcus kodakarensis (strain ATCC BAA-918 / JCM 12380 / KOD1) (Pyrococcus kodakaraensis (strain KOD1)).